Consider the following 440-residue polypeptide: Thymidine phosphorylase (440 aa).

The protein belongs to the thymidine/pyrimidine-nucleoside phosphorylase family. As to quaternary structure, homodimer.

It carries out the reaction thymidine + phosphate = 2-deoxy-alpha-D-ribose 1-phosphate + thymine. The protein operates within pyrimidine metabolism; dTMP biosynthesis via salvage pathway; dTMP from thymine: step 1/2. Functionally, the enzymes which catalyze the reversible phosphorolysis of pyrimidine nucleosides are involved in the degradation of these compounds and in their utilization as carbon and energy sources, or in the rescue of pyrimidine bases for nucleotide synthesis. This Erwinia tasmaniensis (strain DSM 17950 / CFBP 7177 / CIP 109463 / NCPPB 4357 / Et1/99) protein is Thymidine phosphorylase.